Here is a 421-residue protein sequence, read N- to C-terminus: Exopolysaccharide production protein ExoF (421 aa).

Residues 1–31 (MQSNRRSGKSAGSRMVSCFTRLALLAALAAS) form the signal peptide.

It localises to the periplasm. It participates in glycan metabolism; exopolysaccharide biosynthesis. In terms of biological role, involved in succinoglycan (EPS I) synthesis. Needed for the addition of the first sugar (galactose) to the isoprenoid carrier. This Rhizobium meliloti (strain 1021) (Ensifer meliloti) protein is Exopolysaccharide production protein ExoF (exoF).